The following is a 631-amino-acid chain: Nucleoside triphosphatase I (631 aa).

The region spanning 42 to 204 (FLGLDSMHSL…TMLVNLLRPG (163 aa)) is the Helicase ATP-binding domain. Position 55–62 (55–62 (HETGVGKT)) interacts with ATP. The short motif at 141–144 (DECH) is the DEXH box element. Residues 367-532 (KFIDVCLGIL…EFVQLFRVFK (166 aa)) enclose the Helicase C-terminal domain.

It belongs to the helicase family. NPH I subfamily. In terms of assembly, monomer.

It catalyses the reaction a ribonucleoside 5'-triphosphate + H2O = a ribonucleoside 5'-diphosphate + phosphate + H(+). Serves two roles in transcription; it acts in concert with viral termination factor/capping enzyme to catalyze release of UUUUUNU-containing nascent RNA from the elongation complex, and it acts by itself as a polymerase elongation factor to facilitate readthrough of intrinsic pause sites. The protein is Nucleoside triphosphatase I (NPH1) of Homo sapiens (Human).